A 315-amino-acid chain; its full sequence is MAGSVTVADLVKNTRLDVYHGADLLEKKDITTSDISRPGLALTGYFNYYPRERVQLLGKTETAYSKNMSHDERLMIFRKMCQLTTPAFVISTGLPVPEELVQAGEENGVPILGTKMTSSRILSNMTNYLEGKLAERQSVHGVLVDIYGLGVLITGDSGVGKSETALELVKRGHRLIADDRVDVYQQDEQTLVGEAPAILNHLLEIRGIGIIDVMNLFGAGAVRQDTDIDLIVHLENWTPDKQFDRLGNGEQNRKFFDVEVPEISIPVKTGRNLAIIIEAAAMNFRAESMGYDATKVFDDNLNKLIKTNSVHDSHK.

Residues His-140 and Lys-161 contribute to the active site. 155 to 162 (GDSGVGKS) is an ATP binding site. Residue Ser-162 participates in Mg(2+) binding. Asp-179 serves as the catalytic Proton acceptor; for phosphorylation activity. Proton donor; for dephosphorylation activity. Residues 203–212 (LEIRGIGIID) are important for the catalytic mechanism of both phosphorylation and dephosphorylation. Glu-204 lines the Mg(2+) pocket. Arg-245 is a catalytic residue. Positions 266–271 (PVKTGR) are important for the catalytic mechanism of dephosphorylation.

This sequence belongs to the HPrK/P family. Homohexamer. It depends on Mg(2+) as a cofactor.

It carries out the reaction [HPr protein]-L-serine + ATP = [HPr protein]-O-phospho-L-serine + ADP + H(+). The enzyme catalyses [HPr protein]-O-phospho-L-serine + phosphate + H(+) = [HPr protein]-L-serine + diphosphate. Catalyzes the ATP- as well as the pyrophosphate-dependent phosphorylation of a specific serine residue in HPr, a phosphocarrier protein of the phosphoenolpyruvate-dependent sugar phosphotransferase system (PTS). HprK/P also catalyzes the pyrophosphate-producing, inorganic phosphate-dependent dephosphorylation (phosphorolysis) of seryl-phosphorylated HPr (P-Ser-HPr). The two antagonistic activities of HprK/P are regulated by several intracellular metabolites, which change their concentration in response to the absence or presence of rapidly metabolisable carbon sources (glucose, fructose, etc.) in the growth medium. Therefore, by controlling the phosphorylation state of HPr, HPrK/P is a sensor enzyme that plays a major role in the regulation of carbon metabolism and sugar transport: it mediates carbon catabolite repression (CCR), and regulates PTS-catalyzed carbohydrate uptake and inducer exclusion. This Lactiplantibacillus plantarum (strain ATCC BAA-793 / NCIMB 8826 / WCFS1) (Lactobacillus plantarum) protein is HPr kinase/phosphorylase.